The primary structure comprises 207 residues: MTLPDFRLIRLLPLASLVLTACTLPGHEGPGKSPDSPQWRQHQQEVRHLNQYQTRGAFAYISDDQKVYARFFWQQTGQDRYRLLLTNPLGSTELELNAQPGNVQLVDNKGQRYTADDAEEMIGKLTGMPIPLNSLRQWILGLPGDATDYKLDDQYRLSEVNYRQDGKNWKVVYGGYDSKTQPAMPANMELSDGSQRIKLKMDNWIVK.

Positions 1–21 (MTLPDFRLIRLLPLASLVLTA) are cleaved as a signal peptide. A lipid anchor (N-palmitoyl cysteine) is attached at C22. C22 carries S-diacylglycerol cysteine lipidation.

Belongs to the LolB family. In terms of assembly, monomer.

It is found in the cell outer membrane. Plays a critical role in the incorporation of lipoproteins in the outer membrane after they are released by the LolA protein. In Salmonella schwarzengrund (strain CVM19633), this protein is Outer-membrane lipoprotein LolB.